Reading from the N-terminus, the 272-residue chain is Proteasome subunit beta type-5 (272 aa).

Positions 1 to 55 are cleaved as a propeptide — removed in mature form; sequence MKLDTSGLESTAPIFRRSDFVFDGLQMTPSFDLPNPTDFDGFQKEAVQMVKPAKG. Thr-56 acts as the Nucleophile in catalysis.

This sequence belongs to the peptidase T1B family. As to quaternary structure, the 26S proteasome consists of a 20S proteasome core and two 19S regulatory subunits. The 20S proteasome core is composed of 28 subunits that are arranged in four stacked rings, resulting in a barrel-shaped structure. The two end rings are each formed by seven alpha subunits, and the two central rings are each formed by seven beta subunits. The catalytic chamber with the active sites is on the inside of the barrel.

Its subcellular location is the cytoplasm. The protein localises to the nucleus. It carries out the reaction Cleavage of peptide bonds with very broad specificity.. Its function is as follows. The proteasome is a multicatalytic proteinase complex which is characterized by its ability to cleave peptides with Arg, Phe, Tyr, Leu, and Glu adjacent to the leaving group at neutral or slightly basic pH. The proteasome has an ATP-dependent proteolytic activity. The chain is Proteasome subunit beta type-5 from Spinacia oleracea (Spinach).